Consider the following 352-residue polypeptide: Fe(3+) ions import ATP-binding protein FbpC 1 (352 aa).

Residues Val11–Met241 form the ABC transporter domain. Gly43–Thr50 is a binding site for ATP.

Belongs to the ABC transporter superfamily. Fe(3+) ion importer (TC 3.A.1.10) family. In terms of assembly, the complex is composed of two ATP-binding proteins (FbpC), two transmembrane proteins (FbpB) and a solute-binding protein (FbpA).

The protein localises to the cell inner membrane. The catalysed reaction is Fe(3+)(out) + ATP + H2O = Fe(3+)(in) + ADP + phosphate + H(+). In terms of biological role, part of the ABC transporter complex FbpABC involved in Fe(3+) ions import. Responsible for energy coupling to the transport system. This Pectobacterium atrosepticum (strain SCRI 1043 / ATCC BAA-672) (Erwinia carotovora subsp. atroseptica) protein is Fe(3+) ions import ATP-binding protein FbpC 1.